We begin with the raw amino-acid sequence, 114 residues long: Fumarate reductase subunit D (114 aa).

The next 3 membrane-spanning stretches (helical) occupy residues 27-47 (ICFPVLLLILGVLLPLGLVPV), 50-70 (IVAFAHTWFGKLVILAVTIFP), and 94-114 (WVFYGLSALYSVIVFFAVIAL).

This sequence belongs to the FrdD family. In terms of assembly, part of an enzyme complex containing four subunits: a flavoprotein (FrdA), an iron-sulfur protein (FrdB), and two hydrophobic anchor proteins (FrdC and FrdD).

The protein localises to the cell inner membrane. Anchors the catalytic components of the fumarate reductase complex to the cell membrane, binds quinones. The chain is Fumarate reductase subunit D from Actinobacillus pleuropneumoniae serotype 3 (strain JL03).